The chain runs to 414 residues: Snake venom metalloproteinase (414 aa).

The first 20 residues, 1 to 20, serve as a signal peptide directing secretion; the sequence is MIEVLLVTICLAVFPYQGSS. Residues 21 to 190 constitute a propeptide that is removed on maturation; sequence IILESGNVND…KASDLNFNSD (170 aa). Residue Gln-191 is modified to Pyrrolidone carboxylic acid. The region spanning 197 to 393 is the Peptidase M12B domain; the sequence is RYVELVIVAD…YKPQCILNKP (197 aa). Glu-200 and Asp-284 together coordinate Ca(2+). 2 disulfides stabilise this stretch: Cys-308–Cys-388 and Cys-348–Cys-355. His-333 is a binding site for Zn(2+). Glu-334 is a catalytic residue. Residues His-337 and His-343 each contribute to the Zn(2+) site. Residues Cys-388 and Asn-391 each contribute to the Ca(2+) site. Positions 394–414 are excised as a propeptide; the sequence is LRIDPVSTPVSGNELLEAGEE.

The protein belongs to the venom metalloproteinase (M12B) family. P-I subfamily. Monomer. Requires Zn(2+) as cofactor. In terms of tissue distribution, expressed by the venom gland.

It localises to the secreted. Its function is as follows. Snake venom metalloproteinase that impairs hemostasis in the envenomed animal. The chain is Snake venom metalloproteinase from Crotalus molossus molossus (Northern black-tailed rattlesnake).